Reading from the N-terminus, the 55-residue chain is Large ribosomal subunit protein bL33A (55 aa).

This sequence belongs to the bacterial ribosomal protein bL33 family.

This chain is Large ribosomal subunit protein bL33A, found in Mycobacterium sp. (strain JLS).